The primary structure comprises 373 residues: Opsin Rh1 (373 aa).

The Extracellular portion of the chain corresponds to 1 to 54 (MDSFAAVATQLGPHFAALSNGSVVDKVTPDMAHLISPYWNQFPAMDPIWAKILT). N-linked (GlcNAc...) asparagine glycosylation is present at asparagine 20. The chain crosses the membrane as a helical span at residues 55 to 75 (AYMIIIGMISWCGNGVVIYIF). Residues 76–86 (ATTKSLRTPAN) are Cytoplasmic-facing. A helical membrane pass occupies residues 87 to 107 (LLVINLAISDFGIMITNTPMM). Over 108-124 (GINLYFETWVLGPMMCD) the chain is Extracellular. A disulfide bridge connects residues cysteine 123 and cysteine 200. Residues 125-145 (IYAGLGSAFGCSSIWSMCMIS) form a helical membrane-spanning segment. At 146-162 (LDRYQVIVKGMAGRPMT) the chain is on the cytoplasmic side. The chain crosses the membrane as a helical span at residues 163-183 (IPLALGKIAYIWFMSSIWCLA). The Extracellular segment spans residues 184–219 (PVFGWSRYVPEGNLTSCGIDYLERDWNPRSYLIFYS). Residue asparagine 196 is glycosylated (N-linked (GlcNAc...) asparagine). The helical transmembrane segment at 220-240 (IFVYYIPLFLICYSYWFIIAA) threads the bilayer. At 241–276 (VSAHEKAMREQAKKMNVKSLRSSEDADKSAEGKLAK) the chain is on the cytoplasmic side. A helical transmembrane segment spans residues 277–297 (VALVTISLWFMAWTPYLVINC). Residues 298-308 (MGLFKFEGLTP) lie on the Extracellular side of the membrane. Residues 309–331 (LNTIWGACFAKSAACYNPIVYGI) form a helical membrane-spanning segment. The residue at position 319 (lysine 319) is an N6-(retinylidene)lysine. The Cytoplasmic segment spans residues 332–373 (SHPKYRLALKEKCPCCVFGKVDDGKSSEAQSQATNSEAESKA). The interval 354–373 (DGKSSEAQSQATNSEAESKA) is disordered. Polar residues predominate over residues 358–373 (SEAQSQATNSEAESKA).

The protein belongs to the G-protein coupled receptor 1 family. Opsin subfamily. Post-translationally, phosphorylated on some or all of the serine and threonine residues present in the C-terminal region.

Its subcellular location is the cell projection. The protein localises to the rhabdomere membrane. In terms of biological role, visual pigments are the light-absorbing molecules that mediate vision. They consist of an apoprotein, opsin, covalently linked to cis-retinal. This is Opsin Rh1 (ninaE) from Drosophila pseudoobscura pseudoobscura (Fruit fly).